The following is a 337-amino-acid chain: 2-oxoglutarate-dependent dioxygenase frbA (337 aa).

The Fe2OG dioxygenase domain maps to 175–290 (CSAELRLNHY…RHSLAYFGKP (116 aa)). Positions 202, 204, and 262 each coordinate Fe cation. Arginine 281 serves as a coordination point for 2-oxoglutarate.

This sequence belongs to the iron/ascorbate-dependent oxidoreductase family. The cofactor is Fe(2+).

Its pathway is antifungal biosynthesis. In terms of biological role, 2-oxoglutarate-dependent dioxygenase; part of the gene cluster that mediates the biosynthesis of the antifungal antibiotic FR901469, an inhibitor of beta-1,3-glucansynthase, exerting antifungal activity against the pathogenes Candida albicans and Aspergillus fumigatus. FR901469 is a cyclic depsipeptide containing 12 amino acid residues and a fatty acid chain. The NRPS frbI contains 12 modules responsible for the formation of the depsipeptide backbone which is denoted as Acyl-Thr-Ala-Tyr-Val-4OHPro-Thr-Thr-3OHPro-threo3OHGln-Gly-Thr-Orn-OH (C71H116N14O23). The PKS frbB is probably involved in the production of the hydrocarbon chain, and the acyl-CoA ligase frbC might be involved in the transport of the chain to the peptide ptoduct of frbI. Because FR901469 contains 3 hydroxylated amino acid residues, the 3 oxygenases frbA, frbH, and frbJ might be participating in amino acid hydroxylation. As no thioesterase domains were detected in frbI or frbB, the thioesterases frbD and frbE may instead release and cyclize the products of the NRPS and PKS, respectively. In Dothideomycetidae sp. (strain 11243) (Fungal sp. (strain No.11243)), this protein is 2-oxoglutarate-dependent dioxygenase frbA.